The following is a 276-amino-acid chain: D-aminoacyl-tRNA deacylase (276 aa).

This sequence belongs to the DtdA deacylase family. As to quaternary structure, monomer. The cofactor is Zn(2+).

It catalyses the reaction a D-aminoacyl-tRNA + H2O = a tRNA + a D-alpha-amino acid + H(+). The catalysed reaction is glycyl-tRNA(Ala) + H2O = tRNA(Ala) + glycine + H(+). Its function is as follows. D-aminoacyl-tRNA deacylase with broad substrate specificity. By recycling D-aminoacyl-tRNA to D-amino acids and free tRNA molecules, this enzyme counteracts the toxicity associated with the formation of D-aminoacyl-tRNA entities in vivo. The sequence is that of D-aminoacyl-tRNA deacylase from Korarchaeum cryptofilum (strain OPF8).